Reading from the N-terminus, the 491-residue chain is Glutamyl-tRNA(Gln) amidotransferase subunit A (491 aa).

Active-site charge relay system residues include lysine 76 and serine 154. Serine 178 functions as the Acyl-ester intermediate in the catalytic mechanism.

This sequence belongs to the amidase family. GatA subfamily. In terms of assembly, heterotrimer of A, B and C subunits.

The enzyme catalyses L-glutamyl-tRNA(Gln) + L-glutamine + ATP + H2O = L-glutaminyl-tRNA(Gln) + L-glutamate + ADP + phosphate + H(+). Allows the formation of correctly charged Gln-tRNA(Gln) through the transamidation of misacylated Glu-tRNA(Gln) in organisms which lack glutaminyl-tRNA synthetase. The reaction takes place in the presence of glutamine and ATP through an activated gamma-phospho-Glu-tRNA(Gln). The polypeptide is Glutamyl-tRNA(Gln) amidotransferase subunit A (Cereibacter sphaeroides (strain KD131 / KCTC 12085) (Rhodobacter sphaeroides)).